Here is a 328-residue protein sequence, read N- to C-terminus: Carbonic anhydrase-related protein 11 (328 aa).

Positions 1–23 are cleaved as a signal peptide; sequence MGGAARLSAPQALVLWAALGAAA. One can recognise an Alpha-carbonic anhydrase domain in the interval 33–303; the sequence is DWWSYKENLQ…LAHRALRGNR (271 aa). Asn118 carries an N-linked (GlcNAc...) asparagine glycan. The segment at 300–328 is disordered; it reads RGNRDPRHPERRCRGPNYRLHVDGGPHGR. Basic and acidic residues predominate over residues 319 to 328; it reads LHVDGGPHGR.

Belongs to the alpha-carbonic anhydrase family.

The protein localises to the secreted. Its function is as follows. Does not have a catalytic activity. The protein is Carbonic anhydrase-related protein 11 (Ca11) of Mus musculus (Mouse).